We begin with the raw amino-acid sequence, 498 residues long: Pentatricopeptide repeat-containing protein At3g61360 (498 aa).

9 PPR repeats span residues 102–132, 138–172, 175–205, 209–243, 244–278, 279–313, 314–348, 349–385, and 386–420; these read TSDS…VRKD, SFKS…IFRK, GVDE…LHSR, DVKT…GFKP, NSVT…DFDI, TVQI…GLTP, DCGA…GIEP, DSVT…SLVP, and KTPT…GYCP.

The protein belongs to the PPR family. P subfamily.

The sequence is that of Pentatricopeptide repeat-containing protein At3g61360 from Arabidopsis thaliana (Mouse-ear cress).